Consider the following 166-residue polypeptide: Large ribosomal subunit protein uL10 (166 aa).

This sequence belongs to the universal ribosomal protein uL10 family. In terms of assembly, part of the ribosomal stalk of the 50S ribosomal subunit. The N-terminus interacts with L11 and the large rRNA to form the base of the stalk. The C-terminus forms an elongated spine to which L12 dimers bind in a sequential fashion forming a multimeric L10(L12)X complex.

Its function is as follows. Forms part of the ribosomal stalk, playing a central role in the interaction of the ribosome with GTP-bound translation factors. The protein is Large ribosomal subunit protein uL10 of Pseudomonas putida (strain W619).